Reading from the N-terminus, the 427-residue chain is Enolase (427 aa).

Gln162 provides a ligand contact to (2R)-2-phosphoglycerate. The active-site Proton donor is the Glu204. Residues Asp241, Glu284, and Asp311 each contribute to the Mg(2+) site. Residues Lys336, Arg365, Ser366, and Lys387 each contribute to the (2R)-2-phosphoglycerate site. Lys336 serves as the catalytic Proton acceptor.

The protein belongs to the enolase family. Mg(2+) is required as a cofactor.

The protein resides in the cytoplasm. It localises to the secreted. It is found in the cell surface. The catalysed reaction is (2R)-2-phosphoglycerate = phosphoenolpyruvate + H2O. Its pathway is carbohydrate degradation; glycolysis; pyruvate from D-glyceraldehyde 3-phosphate: step 4/5. Its function is as follows. Catalyzes the reversible conversion of 2-phosphoglycerate (2-PG) into phosphoenolpyruvate (PEP). It is essential for the degradation of carbohydrates via glycolysis. The protein is Enolase of Corynebacterium kroppenstedtii (strain DSM 44385 / JCM 11950 / CIP 105744 / CCUG 35717).